A 350-amino-acid chain; its full sequence is Histidinol-phosphate aminotransferase 1 (350 aa).

Position 209 is an N6-(pyridoxal phosphate)lysine (Lys-209).

It belongs to the class-II pyridoxal-phosphate-dependent aminotransferase family. Histidinol-phosphate aminotransferase subfamily. As to quaternary structure, homodimer. It depends on pyridoxal 5'-phosphate as a cofactor.

It carries out the reaction L-histidinol phosphate + 2-oxoglutarate = 3-(imidazol-4-yl)-2-oxopropyl phosphate + L-glutamate. It functions in the pathway amino-acid biosynthesis; L-histidine biosynthesis; L-histidine from 5-phospho-alpha-D-ribose 1-diphosphate: step 7/9. The polypeptide is Histidinol-phosphate aminotransferase 1 (hisC1) (Bradyrhizobium diazoefficiens (strain JCM 10833 / BCRC 13528 / IAM 13628 / NBRC 14792 / USDA 110)).